A 410-amino-acid polypeptide reads, in one-letter code: Acetate kinase (410 aa).

A Mg(2+)-binding site is contributed by asparagine 7. Lysine 14 contributes to the ATP binding site. Arginine 98 is a substrate binding site. Residue aspartate 155 is the Proton donor/acceptor of the active site. Residues 215-219 (HLGNG), 290-292 (DMR), and 338-342 (GIGEN) contribute to the ATP site. Glutamate 392 contributes to the Mg(2+) binding site.

Belongs to the acetokinase family. In terms of assembly, homodimer. Requires Mg(2+) as cofactor. The cofactor is Mn(2+).

It localises to the cytoplasm. It catalyses the reaction acetate + ATP = acetyl phosphate + ADP. It functions in the pathway metabolic intermediate biosynthesis; acetyl-CoA biosynthesis; acetyl-CoA from acetate: step 1/2. Its function is as follows. Catalyzes the formation of acetyl phosphate from acetate and ATP. Can also catalyze the reverse reaction. This Kocuria rhizophila (strain ATCC 9341 / DSM 348 / NBRC 103217 / DC2201) protein is Acetate kinase.